A 59-amino-acid chain; its full sequence is U-reduvitoxin-Pr6a (59 aa).

Positions 1–19 (MKVFLLTILLCFLIAYCAG) are cleaved as a signal peptide. Intrachain disulfides connect Cys-31-Cys-46, Cys-38-Cys-51, and Cys-45-Cys-58.

It belongs to the venom Ptu1-like knottin family. As to expression, expressed by the venom gland.

It is found in the secreted. Functionally, binds reversibly and blocks P/Q-type voltage-gated calcium channels (Cav). The polypeptide is U-reduvitoxin-Pr6a (Platymeris rhadamanthus (Red spot assassin bug)).